We begin with the raw amino-acid sequence, 151 residues long: 3-hydroxyacyl-[acyl-carrier-protein] dehydratase FabZ (151 aa).

His54 is a catalytic residue.

Belongs to the thioester dehydratase family. FabZ subfamily.

It is found in the cytoplasm. It catalyses the reaction a (3R)-hydroxyacyl-[ACP] = a (2E)-enoyl-[ACP] + H2O. Functionally, involved in unsaturated fatty acids biosynthesis. Catalyzes the dehydration of short chain beta-hydroxyacyl-ACPs and long chain saturated and unsaturated beta-hydroxyacyl-ACPs. The sequence is that of 3-hydroxyacyl-[acyl-carrier-protein] dehydratase FabZ from Klebsiella pneumoniae (strain 342).